The primary structure comprises 430 residues: Adenylosuccinate synthetase (430 aa).

GTP-binding positions include 12 to 18 (GDEGKGK) and 40 to 42 (GHT). The active-site Proton acceptor is aspartate 13. Residues aspartate 13 and glycine 40 each contribute to the Mg(2+) site. Residues 13–16 (DEGK), 38–41 (NAGH), threonine 130, arginine 144, glutamine 224, threonine 239, and arginine 303 contribute to the IMP site. Residue histidine 41 is the Proton donor of the active site. A substrate-binding site is contributed by 299–305 (VNTGRKR). Residues arginine 305, 331–333 (KLD), and 413–415 (STS) each bind GTP.

This sequence belongs to the adenylosuccinate synthetase family. In terms of assembly, homodimer. Requires Mg(2+) as cofactor.

Its subcellular location is the cytoplasm. The catalysed reaction is IMP + L-aspartate + GTP = N(6)-(1,2-dicarboxyethyl)-AMP + GDP + phosphate + 2 H(+). It functions in the pathway purine metabolism; AMP biosynthesis via de novo pathway; AMP from IMP: step 1/2. Plays an important role in the de novo pathway of purine nucleotide biosynthesis. Catalyzes the first committed step in the biosynthesis of AMP from IMP. In Rhodopseudomonas palustris (strain TIE-1), this protein is Adenylosuccinate synthetase.